A 269-amino-acid polypeptide reads, in one-letter code: Eukaryotic translation initiation factor 3 subunit G-2 (269 aa).

The 79-residue stretch at 189-267 folds into the RRM domain; sequence SAVRISNLSE…LILCVEWSKP (79 aa).

It belongs to the eIF-3 subunit G family. Component of the eukaryotic translation initiation factor 3 (eIF-3) complex. The eIF-3 complex interacts with pix.

Its subcellular location is the cytoplasm. In terms of biological role, RNA-binding component of the eukaryotic translation initiation factor 3 (eIF-3) complex, which is involved in protein synthesis of a specialized repertoire of mRNAs and, together with other initiation factors, stimulates binding of mRNA and methionyl-tRNAi to the 40S ribosome. The eIF-3 complex specifically targets and initiates translation of a subset of mRNAs involved in cell proliferation. This subunit can bind 18S rRNA. This chain is Eukaryotic translation initiation factor 3 subunit G-2, found in Drosophila ananassae (Fruit fly).